The chain runs to 96 residues: Plasminogen-like protein B (96 aa).

Residues 1–19 (MEHKEVVLLLLLFLKSGQG) form the signal peptide. One can recognise a PAN domain in the interval 20–96 (EPLDDYVNTQ…RMRDAVLFEK (77 aa)). Disulfide bonds link cysteine 49-cysteine 73 and cysteine 53-cysteine 61.

The protein resides in the secreted. Functionally, may bind noncovalently to lysine binding sites present in the kringle structures of plasminogen. This may interfere with the binding of fibrin or alpha-2-antiplasmin to plasminogen and may result in the localization of activity at sites necessary for extracellular matrix destruction. The protein is Plasminogen-like protein B (PLGLB1) of Homo sapiens (Human).